Consider the following 138-residue polypeptide: Cysteine desulfuration protein SufE (138 aa).

Cys-51 serves as the catalytic Cysteine persulfide intermediate.

Belongs to the SufE family. In terms of assembly, homodimer. Interacts with SufS.

It is found in the cytoplasm. It functions in the pathway cofactor biosynthesis; iron-sulfur cluster biosynthesis. Functionally, participates in cysteine desulfuration mediated by SufS. Cysteine desulfuration mobilizes sulfur from L-cysteine to yield L-alanine and constitutes an essential step in sulfur metabolism for biosynthesis of a variety of sulfur-containing biomolecules. Functions as a sulfur acceptor for SufS, by mediating the direct transfer of the sulfur atom from the S-sulfanylcysteine of SufS, an intermediate product of cysteine desulfuration process. This Photorhabdus laumondii subsp. laumondii (strain DSM 15139 / CIP 105565 / TT01) (Photorhabdus luminescens subsp. laumondii) protein is Cysteine desulfuration protein SufE.